The following is a 258-amino-acid chain: tRNA pseudouridine synthase A (258 aa).

Asp52 (nucleophile) is an active-site residue. Position 110 (Tyr110) interacts with substrate.

This sequence belongs to the tRNA pseudouridine synthase TruA family. In terms of assembly, homodimer.

It carries out the reaction uridine(38/39/40) in tRNA = pseudouridine(38/39/40) in tRNA. Functionally, formation of pseudouridine at positions 38, 39 and 40 in the anticodon stem and loop of transfer RNAs. The polypeptide is tRNA pseudouridine synthase A (Francisella philomiragia subsp. philomiragia (strain ATCC 25017 / CCUG 19701 / FSC 153 / O#319-036)).